A 222-amino-acid chain; its full sequence is Glutathione S-transferase U21 (222 aa).

One can recognise a GST N-terminal domain in the interval 3–83; it reads AEVILLGFWP…YIDEVWSDNN (81 aa). Glutathione-binding positions include 13–14, 40–41, 54–55, and 67–68; these read SM, NK, TI, and ES. The GST C-terminal domain maps to 89 to 211; that stretch reads DPYHRAQALF…LPDSEKVVGY (123 aa).

The protein belongs to the GST superfamily. Tau family.

It is found in the cytoplasm. The protein localises to the cytosol. The catalysed reaction is RX + glutathione = an S-substituted glutathione + a halide anion + H(+). May be involved in the conjugation of reduced glutathione to a wide number of exogenous and endogenous hydrophobic electrophiles and have a detoxification role against certain herbicides. The sequence is that of Glutathione S-transferase U21 (GSTU21) from Arabidopsis thaliana (Mouse-ear cress).